A 361-amino-acid chain; its full sequence is Glutaminyl-peptide cyclotransferase (361 aa).

The N-terminal stretch at 1–28 (MAGGRHRRVVGTLHLLLLVAALPWASRG) is a signal peptide. A glycan (N-linked (GlcNAc...) asparagine) is linked at N49. C139 and C164 are disulfide-bonded. D159 contributes to the Zn(2+) binding site. E201 functions as the Proton acceptor in the catalytic mechanism. E202 is a Zn(2+) binding site. D248 acts as the Proton acceptor in catalysis. N-linked (GlcNAc...) asparagine glycosylation is present at N296. H330 provides a ligand contact to Zn(2+).

Belongs to the glutaminyl-peptide cyclotransferase family.

Its subcellular location is the secreted. The enzyme catalyses N-terminal L-glutaminyl-[peptide] = N-terminal 5-oxo-L-prolyl-[peptide] + NH4(+). Its function is as follows. Responsible for the biosynthesis of pyroglutamyl peptides. Has a bias against acidic and tryptophan residues adjacent to the N-terminal glutaminyl residue and a lack of importance of chain length after the second residue. Also catalyzes N-terminal pyroglutamate formation. In vitro, catalyzes pyroglutamate formation of N-terminally truncated form of APP amyloid-beta peptides [Glu-3]-amyloid-beta. May be involved in the N-terminal pyroglutamate formation of several amyloid-related plaque-forming peptides. This is Glutaminyl-peptide cyclotransferase (QPCT) from Homo sapiens (Human).